Here is a 143-residue protein sequence, read N- to C-terminus: Large ribosomal subunit protein uL11 (143 aa).

It belongs to the universal ribosomal protein uL11 family. In terms of assembly, part of the ribosomal stalk of the 50S ribosomal subunit. Interacts with L10 and the large rRNA to form the base of the stalk. L10 forms an elongated spine to which L12 dimers bind in a sequential fashion forming a multimeric L10(L12)X complex. Post-translationally, one or more lysine residues are methylated.

Forms part of the ribosomal stalk which helps the ribosome interact with GTP-bound translation factors. In Polynucleobacter asymbioticus (strain DSM 18221 / CIP 109841 / QLW-P1DMWA-1) (Polynucleobacter necessarius subsp. asymbioticus), this protein is Large ribosomal subunit protein uL11.